A 779-amino-acid polypeptide reads, in one-letter code: Lysosome membrane protein 2-A (779 aa).

The Cytoplasmic segment spans residues 1–17 (MVKRGCCHRKMVNHKGC). A helical membrane pass occupies residues 18–38 (LVSGIFLAVIGAVLFILAFAL). The Lumenal portion of the chain corresponds to 39 to 732 (LPHLINQTTQ…LLNSQFKLIK (694 aa)). 19 N-linked (GlcNAc...) asparagine glycosylation sites follow: Asn-44, Asn-86, Asn-95, Asn-114, Asn-117, Asn-201, Asn-239, Asn-262, Asn-266, Asn-277, Asn-369, Asn-410, Asn-440, Asn-508, Asn-543, Asn-601, Asn-619, Asn-651, and Asn-693. Residues 733 to 753 (ILGFVPVIVVSIIGGIILIAG) traverse the membrane as a helical segment. The Cytoplasmic portion of the chain corresponds to 754 to 779 (ISMFAFGFKKLRQQKQQGYQAIINNE). The Tyrosine-type lysosomal sorting signal motif lies at 771 to 774 (GYQA).

This sequence belongs to the CD36 family. Post-translationally, heavily glycosylated.

It localises to the lysosome membrane. May act as a lysosomal receptor. May be involved in macropinocytosis and fluid phase exocytosis. Binds to the anionic phospholipid phosphoinositol 4,5-bisphosphate, but not to phosphatidylcholine and only weakly to phosphatidylserine. This Dictyostelium discoideum (Social amoeba) protein is Lysosome membrane protein 2-A (lmpA).